A 100-amino-acid chain; its full sequence is Large ribosomal subunit protein uL23 (100 aa).

Belongs to the universal ribosomal protein uL23 family. As to quaternary structure, part of the 50S ribosomal subunit. Contacts protein L29, and trigger factor when it is bound to the ribosome.

One of the early assembly proteins it binds 23S rRNA. One of the proteins that surrounds the polypeptide exit tunnel on the outside of the ribosome. Forms the main docking site for trigger factor binding to the ribosome. The chain is Large ribosomal subunit protein uL23 from Buchnera aphidicola subsp. Baizongia pistaciae (strain Bp).